The sequence spans 236 residues: Ribosomal RNA large subunit methyltransferase E (236 aa).

5 residues coordinate S-adenosyl-L-methionine: Gly-76, Trp-78, Asp-99, Asp-115, and Asp-140. Catalysis depends on Lys-180, which acts as the Proton acceptor.

The protein belongs to the class I-like SAM-binding methyltransferase superfamily. RNA methyltransferase RlmE family.

The protein resides in the cytoplasm. The enzyme catalyses uridine(2552) in 23S rRNA + S-adenosyl-L-methionine = 2'-O-methyluridine(2552) in 23S rRNA + S-adenosyl-L-homocysteine + H(+). In terms of biological role, specifically methylates the uridine in position 2552 of 23S rRNA at the 2'-O position of the ribose in the fully assembled 50S ribosomal subunit. This chain is Ribosomal RNA large subunit methyltransferase E, found in Rhodopseudomonas palustris (strain HaA2).